The chain runs to 202 residues: Response regulator RamR (202 aa).

The interval M1–R121 is response regulatory. An HTH luxR-type domain is found at L135–G200. Positions I159–A178 form a DNA-binding region, H-T-H motif.

Homodimer, in the absence of phosphorylation. Post-translationally, may be phosphorylated by an unknown kinase, probably on Asp-56.

In terms of biological role, a transcription factor required for aerial hyphae formation on rich medium. Activates transcription of ramC. Might be part of a two-component regulatory system. Binds the promoter of ramC. Non-phosphorylated protein cooperatively binds multiple sites in the ramC promoter. Has not been seen to autophosphorylate using the small molecule phosphodonors phosphoramidate, acetyl phosphate or carbamoyl phosphate. Upon low expression suppresses the bald (bld, no aerial hyphae) phenotype of citA but not bldJ mutants; higher expression also suppresses the bldJ mutant as well as several other bld mutations, inducing SapB production even on media where SapB is normally not produced. Expression of the ram locus (ramA, ramB and ramR) induces rapid aerial mycelium formation in S.lividans. Overexpression suppresses the no aerial hyphae phenotype of a chaplin-negative strain, probably by inducing expression of SapB. Overexpression of RamR show there are about 280 genes having at least a threefold increase or fourfold decrease in RNA abundance versus wild-type including gene cluster SCO4072-SCO4075. The chain is Response regulator RamR from Streptomyces coelicolor (strain ATCC BAA-471 / A3(2) / M145).